Reading from the N-terminus, the 245-residue chain is Small ribosomal subunit protein uS2 (245 aa).

Belongs to the universal ribosomal protein uS2 family.

The polypeptide is Small ribosomal subunit protein uS2 (Pseudomonas putida (strain ATCC 47054 / DSM 6125 / CFBP 8728 / NCIMB 11950 / KT2440)).